The chain runs to 88 residues: Small ribosomal subunit protein bS20 (88 aa).

The span at 1–11 (MANIKSSEKDI) shows a compositional bias: basic and acidic residues. 2 disordered regions span residues 1-31 (MANI…LRTQ) and 69-88 (SKNA…SSAA).

The protein belongs to the bacterial ribosomal protein bS20 family.

Its function is as follows. Binds directly to 16S ribosomal RNA. The chain is Small ribosomal subunit protein bS20 from Leptospira interrogans serogroup Icterohaemorrhagiae serovar copenhageni (strain Fiocruz L1-130).